The primary structure comprises 122 residues: Large ribosomal subunit protein uL14c (122 aa).

This sequence belongs to the universal ribosomal protein uL14 family. Part of the 50S ribosomal subunit.

The protein localises to the plastid. It is found in the chloroplast. Its function is as follows. Binds to 23S rRNA. This chain is Large ribosomal subunit protein uL14c, found in Dioscorea elephantipes (Elephant's foot yam).